A 550-amino-acid polypeptide reads, in one-letter code: Hydroxylamine reductase (550 aa).

[4Fe-4S] cluster-binding residues include Cys-5, Cys-8, Cys-17, and Cys-23. 8 residues coordinate hybrid [4Fe-2O-2S] cluster: His-250, Glu-274, Cys-319, Cys-405, Cys-433, Cys-458, Glu-492, and Lys-494. A Cysteine persulfide modification is found at Cys-405.

It belongs to the HCP family. It depends on [4Fe-4S] cluster as a cofactor. The cofactor is hybrid [4Fe-2O-2S] cluster.

Its subcellular location is the cytoplasm. The catalysed reaction is A + NH4(+) + H2O = hydroxylamine + AH2 + H(+). Catalyzes the reduction of hydroxylamine to form NH(3) and H(2)O. The protein is Hydroxylamine reductase of Geobacter sulfurreducens (strain ATCC 51573 / DSM 12127 / PCA).